Reading from the N-terminus, the 1346-residue chain is Proline-rich protein 36 (1346 aa).

Disordered stretches follow at residues 1–403 (MDNK…TQLI), 426–512 (SVSS…QATP), 537–606 (PLTT…PSPL), 633–679 (PRQT…VSPL), 711–1155 (LETQ…AELA), and 1168–1240 (PPLA…RSPK). The segment covering 10–26 (AGAAARTPAARAPGLLT) has biased composition (low complexity). The segment covering 27-40 (PRPPGSPRPPPPVT) has biased composition (pro residues). Composition is skewed to low complexity over residues 41–55 (PAAL…AVGR) and 86–97 (SSRNPASRPPAS). The span at 137 to 152 (SAEETVARGKATEAPK) shows a compositional bias: basic and acidic residues. Residues 165 to 177 (SGPTPGTPSPAMA) show a composition bias toward low complexity. The span at 191–203 (RPAPSARPRPPTE) shows a compositional bias: pro residues. Residues 208–220 (SVSSASEHSTTEP) show a composition bias toward polar residues. Composition is skewed to low complexity over residues 235-255 (QRPA…PARS) and 293-312 (APAL…PSGT). Pro residues-rich tracts occupy residues 329–343 (ATLP…PPPA), 371–380 (PLAPPSPSAP), and 387–397 (PSPPATPPSQV). The segment covering 426–464 (SVSSPLQSMPPTQANPALPSLPTLLSPLATPPLSAMSPL) has biased composition (low complexity). Positions 494–506 (TPPPQASPSPSPP) are enriched in pro residues. Residues 546-558 (PPLVSPSLLASPP) are compositionally biased toward low complexity. The segment covering 559–578 (LQAPPHPQAPPSMTTPPMQA) has biased composition (pro residues). The span at 633-647 (PRQTQASLISPSRPA) shows a compositional bias: polar residues. Over residues 648 to 657 (STPPDSPPLQ) the composition is skewed to pro residues. Residues 658 to 679 (APLSLPASPPLQTSLSPAVSPL) are compositionally biased toward low complexity. Over residues 724-733 (TPPASLTTPP) the composition is skewed to polar residues. Composition is skewed to pro residues over residues 781 to 821 (ETPP…PALA) and 829 to 865 (PSPP…PPLS). Over residues 866–875 (PLATPSPQAP) the composition is skewed to low complexity. Composition is skewed to pro residues over residues 887–917 (FSPP…PSQA), 926–997 (LQVP…PPAS), and 1004–1015 (AKPPPQAPPALA). Composition is skewed to low complexity over residues 1029 to 1046 (FPGQ…MSPL), 1137 to 1146 (DSGPEGGAAA), and 1224 to 1239 (GKAA…SRSP). Position 1310 is a phosphoserine (Ser-1310).

The sequence is that of Proline-rich protein 36 from Homo sapiens (Human).